The primary structure comprises 249 residues: Major phosphate-irrepressible acid phosphatase (249 aa).

An N-terminal signal peptide occupies residues 1–20 (MKKNIIAGCLFSLFSLSALA).

The protein belongs to the class A bacterial acid phosphatase family. Homotetramer.

The protein resides in the periplasm. The enzyme catalyses a phosphate monoester + H2O = an alcohol + phosphate. In Morganella morganii (Proteus morganii), this protein is Major phosphate-irrepressible acid phosphatase (phoC).